Consider the following 484-residue polypeptide: Glutamate--tRNA ligase (484 aa).

Residues 11-21 carry the 'HIGH' region motif; sequence PSPTGLLHIGN. A 'KMSKS' region motif is present at residues 255–259; sequence KLSKR. Lysine 258 is a binding site for ATP.

The protein belongs to the class-I aminoacyl-tRNA synthetase family. Glutamate--tRNA ligase type 1 subfamily. As to quaternary structure, monomer.

The protein localises to the cytoplasm. The catalysed reaction is tRNA(Glu) + L-glutamate + ATP = L-glutamyl-tRNA(Glu) + AMP + diphosphate. Catalyzes the attachment of glutamate to tRNA(Glu) in a two-step reaction: glutamate is first activated by ATP to form Glu-AMP and then transferred to the acceptor end of tRNA(Glu). This chain is Glutamate--tRNA ligase, found in Streptococcus agalactiae serotype Ia (strain ATCC 27591 / A909 / CDC SS700).